The following is a 122-amino-acid chain: Large ribosomal subunit protein uL14c (122 aa).

This sequence belongs to the universal ribosomal protein uL14 family. As to quaternary structure, part of the 50S ribosomal subunit.

The protein resides in the plastid. It localises to the chloroplast. Binds to 23S rRNA. This is Large ribosomal subunit protein uL14c from Marchantia polymorpha (Common liverwort).